We begin with the raw amino-acid sequence, 334 residues long: Cytoskeleton protein RodZ (334 aa).

Residues 1–111 lie on the Cytoplasmic side of the membrane; that stretch reads MNTEATHDQN…LGKRRKKRDG (111 aa). In terms of domain architecture, HTH cro/C1-type spans 19–71; sequence LRNAREQLGLSQQAVAERLCLKVSTVRDIEEDKAPSDLASTFLRGYIRSYARL. The segment at residues 30–49 is a DNA-binding region (H-T-H motif); sequence QQAVAERLCLKVSTVRDIEE. Residues 112–132 traverse the membrane as a helical; Signal-anchor for type II membrane protein segment; sequence WLMSFTWLVLFVVVGLTGAWW. Residues 133-334 lie on the Periplasmic side of the membrane; sequence WQNHKAQQEE…TLNAEPTPAQ (202 aa). The interval 155–241 is disordered; that stretch reads NADKDSGQSV…PSALPTSQAG (87 aa). Composition is skewed to low complexity over residues 170–211 and 219–241; these read AATS…TVVA and TAAT…SQAG.

The protein belongs to the RodZ family.

It localises to the cell inner membrane. Functionally, cytoskeletal protein that is involved in cell-shape control through regulation of the length of the long axis. In Salmonella agona (strain SL483), this protein is Cytoskeleton protein RodZ.